The chain runs to 116 residues: Iron-sulfur cluster insertion protein ErpA (116 aa).

Iron-sulfur cluster-binding residues include Cys44, Cys108, and Cys110.

This sequence belongs to the HesB/IscA family. As to quaternary structure, homodimer. The cofactor is iron-sulfur cluster.

Its function is as follows. Required for insertion of 4Fe-4S clusters for at least IspG. The chain is Iron-sulfur cluster insertion protein ErpA from Pseudomonas fluorescens (strain ATCC BAA-477 / NRRL B-23932 / Pf-5).